The chain runs to 281 residues: 2-dehydro-3-deoxyphosphooctonate aldolase (281 aa).

It belongs to the KdsA family.

The protein localises to the cytoplasm. It carries out the reaction D-arabinose 5-phosphate + phosphoenolpyruvate + H2O = 3-deoxy-alpha-D-manno-2-octulosonate-8-phosphate + phosphate. It participates in carbohydrate biosynthesis; 3-deoxy-D-manno-octulosonate biosynthesis; 3-deoxy-D-manno-octulosonate from D-ribulose 5-phosphate: step 2/3. It functions in the pathway bacterial outer membrane biogenesis; lipopolysaccharide biosynthesis. This Stutzerimonas stutzeri (strain A1501) (Pseudomonas stutzeri) protein is 2-dehydro-3-deoxyphosphooctonate aldolase.